A 763-amino-acid polypeptide reads, in one-letter code: Phosphoglycerol transferase I (763 aa).

Helical transmembrane passes span 1 to 21, 26 to 46, 77 to 97, and 108 to 128; these read MSEL…AWKA, WWFA…ITLF, ILPG…LGWI, and FGYS…SPAF.

This sequence belongs to the OpgB family.

The protein resides in the cell inner membrane. It catalyses the reaction a phosphatidylglycerol + a membrane-derived-oligosaccharide D-glucose = a 1,2-diacyl-sn-glycerol + a membrane-derived-oligosaccharide 6-(glycerophospho)-D-glucose.. Its pathway is glycan metabolism; osmoregulated periplasmic glucan (OPG) biosynthesis. Its function is as follows. Transfers a phosphoglycerol residue from phosphatidylglycerol to the membrane-bound nascent glucan backbones. This chain is Phosphoglycerol transferase I, found in Escherichia coli O139:H28 (strain E24377A / ETEC).